A 98-amino-acid polypeptide reads, in one-letter code: MALTKAELAEALFEQLGMSKRDAKDTVEVFFEEIRKALESGEQVKLSGFGNFDLRDKNERPGRNPKTGEDIPITARRVVTFRPGQKLKARVENIKVEK.

Residues 51–71 (NFDLRDKNERPGRNPKTGEDI) form a disordered region. Positions 53–69 (DLRDKNERPGRNPKTGE) are enriched in basic and acidic residues.

Belongs to the bacterial histone-like protein family. Heterodimer of an alpha and a beta chain.

This protein is one of the two subunits of integration host factor, a specific DNA-binding protein that functions in genetic recombination as well as in transcriptional and translational control. This is Integration host factor subunit alpha from Vibrio cholerae serotype O1 (strain ATCC 39541 / Classical Ogawa 395 / O395).